We begin with the raw amino-acid sequence, 547 residues long: Solute carrier family 22 member 25 (547 aa).

Residues 1–9 (MAFQDLLDQ) lie on the Cytoplasmic side of the membrane. Residues 10–30 (VGGLGRFQILQMVFLIMFNVI) form a helical membrane-spanning segment. The Extracellular segment spans residues 31–145 (VYHQTQLENF…DLVCESQPLN (115 aa)). N-linked (GlcNAc...) asparagine glycosylation is found at Asn56 and Asn102. Residues 146–166 (SVAKFLFMAGMMVGGNLYGHL) form a helical membrane-spanning segment. The Cytoplasmic portion of the chain corresponds to 167-177 (SDRFGRKFVLR). The helical transmembrane segment at 178–198 (WSYLQLAIVGTCAAFAPTILV) threads the bilayer. Topologically, residues 199–204 (YCSLRF) are extracellular. A helical membrane pass occupies residues 205–225 (LAGAATFSIIVNTVLLIVEWI). The Cytoplasmic portion of the chain corresponds to 226-234 (THQFCAMAL). A helical transmembrane segment spans residues 235-255 (TLTLCAASIGHITLGSLAFVI). Topologically, residues 256–259 (RDQC) are extracellular. The helical transmembrane segment at 260–280 (ILQLVMSAPCFVFFLFSRWLA) threads the bilayer. The Cytoplasmic portion of the chain corresponds to 281 to 349 (ESARWLIINN…LLRIPNICKR (69 aa)). A helical transmembrane segment spans residues 350–370 (ICFLSFVRFASTIPFWGLTLH). Residues 371-377 (LQHLGNN) lie on the Extracellular side of the membrane. Residues 378–398 (VFLLQTLFGAVTLLANCVAPW) form a helical membrane-spanning segment. Residues 399–406 (ALNHMSRR) lie on the Cytoplasmic side of the membrane. Residues 407-427 (LSQMLLMFLLATCLLAIIFVP) form a helical membrane-spanning segment. Over 428–434 (QEMQTLR) the chain is Extracellular. A helical membrane pass occupies residues 435–455 (VVLATLGVGAASLGITCSTAQ). Residues 456-470 (ENELIPSIIRGRATG) lie on the Cytoplasmic side of the membrane. The chain crosses the membrane as a helical span at residues 471-491 (ITGNFANIGGALASLMMILSI). At 492–494 (YSR) the chain is on the extracellular side. Residues 495–515 (PLPWIIYGVFAILSGLVVLLL) form a helical membrane-spanning segment. At 516-547 (PETRNQPLLDSIQDVENEGVNSLAAPQRSSVL) the chain is on the cytoplasmic side.

This sequence belongs to the major facilitator (TC 2.A.1) superfamily. Organic cation transporter (TC 2.A.1.19) family. In terms of tissue distribution, expressed exclusively in liver in both embryo and adult.

It localises to the membrane. The sequence is that of Solute carrier family 22 member 25 from Homo sapiens (Human).